Here is a 62-residue protein sequence, read N- to C-terminus: Conotoxin Im11.9 (62 aa).

The N-terminal stretch at 1-22 is a signal peptide; it reads MFRVTSVLLVIVLLNLVVLTNA. Intrachain disulfides connect Cys23–Cys33, Cys27–Cys38, Cys32–Cys41, and Cys37–Cys46. A propeptide spanning residues 23 to 49 is cleaved from the precursor; sequence CHMDCSKMTCCSGICCFYCGRPMCPGT.

It belongs to the conotoxin I2 superfamily. Expressed by the venom duct.

Its subcellular location is the secreted. In terms of biological role, probable neurotoxin. The chain is Conotoxin Im11.9 from Conus imperialis (Imperial cone).